We begin with the raw amino-acid sequence, 270 residues long: Shikimate dehydrogenase (NADP(+)) (270 aa).

Residues 14–16 and T61 contribute to the shikimate site; that span reads SLS. Residue K65 is the Proton acceptor of the active site. D77 serves as a coordination point for NADP(+). Shikimate is bound by residues N86 and D101. NADP(+) contacts are provided by residues 125–129 and I210; that span reads GNGGA. A shikimate-binding site is contributed by Y212. Residue G233 coordinates NADP(+).

The protein belongs to the shikimate dehydrogenase family. In terms of assembly, homodimer.

The enzyme catalyses shikimate + NADP(+) = 3-dehydroshikimate + NADPH + H(+). It functions in the pathway metabolic intermediate biosynthesis; chorismate biosynthesis; chorismate from D-erythrose 4-phosphate and phosphoenolpyruvate: step 4/7. Functionally, involved in the biosynthesis of the chorismate, which leads to the biosynthesis of aromatic amino acids. Catalyzes the reversible NADPH linked reduction of 3-dehydroshikimate (DHSA) to yield shikimate (SA). This chain is Shikimate dehydrogenase (NADP(+)), found in Clostridium beijerinckii (strain ATCC 51743 / NCIMB 8052) (Clostridium acetobutylicum).